Here is a 314-residue protein sequence, read N- to C-terminus: Bifunctional riboflavin kinase/FMN adenylyltransferase (314 aa).

The protein belongs to the RibF family.

The enzyme catalyses riboflavin + ATP = FMN + ADP + H(+). The catalysed reaction is FMN + ATP + H(+) = FAD + diphosphate. Its pathway is cofactor biosynthesis; FAD biosynthesis; FAD from FMN: step 1/1. The protein operates within cofactor biosynthesis; FMN biosynthesis; FMN from riboflavin (ATP route): step 1/1. Catalyzes the phosphorylation of riboflavin to FMN followed by the adenylation of FMN to FAD. Can also catalyze the phosphorylation of the toxic riboflavin analogs 8-demethyl-8-aminoriboflavin (AF) to 8-demethyl-8-aminoriboflavin mononucleotide (AFMN) and roseoflavin (RoF) to roseoflavin mononucleotide (RoFMN), and the adenylation of AFMN to 8-demethyl-8-aminoriboflavin adenine dinucleotide (AFAD). This Listeria monocytogenes serovar 1/2a (strain ATCC BAA-679 / EGD-e) protein is Bifunctional riboflavin kinase/FMN adenylyltransferase.